We begin with the raw amino-acid sequence, 489 residues long: MSALHTLSLAAIRDALARREVRAEDAVLDCLARIETTEPRIDALLHLRAEAAIEEARALDAAGPDASRPLWGVPVTVKDALTTAGTPTTAGSRILEDFVPFYDAFAVQRLREAGAIILGKNNMDEFAMGSSTENSAYKPTRNPWDTARVPGGSSGGSAASVAAGQCFASLGTDTGGSIRQPASLCGCVGLKPTYGRVSRFGLIAYGSSLDQIGPMTRTVEDAAIVMGVIAGHDKRDSTCADRPVEDFAAALASRHDLAGVRIGVPAEFWGEGLSPEVATSCRAALDAARDLGATIVDVALPHTPQSIAAYYIVASAEASSNLARYDGVRYGKRAHAPEDLMDLYVRSRSEGLGDEVQRRIMLGTYVLSSGYYDAYYRKAAQVRRRILEDYRNAFATCDVICGPVSPVTAWPLGALTADPLQMYLMDVFTLSLNLAGLPGLSLPVGLGTESGMPVGIQLLGRSFDEATLLSVGNVLSRALPPLGSPAGLR.

Catalysis depends on charge relay system residues Lys-78 and Ser-153. Ser-177 acts as the Acyl-ester intermediate in catalysis.

The protein belongs to the amidase family. GatA subfamily. As to quaternary structure, heterotrimer of A, B and C subunits.

The catalysed reaction is L-glutamyl-tRNA(Gln) + L-glutamine + ATP + H2O = L-glutaminyl-tRNA(Gln) + L-glutamate + ADP + phosphate + H(+). In terms of biological role, allows the formation of correctly charged Gln-tRNA(Gln) through the transamidation of misacylated Glu-tRNA(Gln) in organisms which lack glutaminyl-tRNA synthetase. The reaction takes place in the presence of glutamine and ATP through an activated gamma-phospho-Glu-tRNA(Gln). In Nitratidesulfovibrio vulgaris (strain DP4) (Desulfovibrio vulgaris), this protein is Glutamyl-tRNA(Gln) amidotransferase subunit A.